The following is a 467-amino-acid chain: ATP synthase subunit beta (467 aa).

Residue 153–160 coordinates ATP; the sequence is GGAGVGKT.

Belongs to the ATPase alpha/beta chains family. As to quaternary structure, F-type ATPases have 2 components, CF(1) - the catalytic core - and CF(0) - the membrane proton channel. CF(1) has five subunits: alpha(3), beta(3), gamma(1), delta(1), epsilon(1). CF(0) has three main subunits: a(1), b(2) and c(9-12). The alpha and beta chains form an alternating ring which encloses part of the gamma chain. CF(1) is attached to CF(0) by a central stalk formed by the gamma and epsilon chains, while a peripheral stalk is formed by the delta and b chains.

It is found in the cell membrane. The catalysed reaction is ATP + H2O + 4 H(+)(in) = ADP + phosphate + 5 H(+)(out). Its function is as follows. Produces ATP from ADP in the presence of a proton gradient across the membrane. The catalytic sites are hosted primarily by the beta subunits. In Lactiplantibacillus plantarum (strain ATCC BAA-793 / NCIMB 8826 / WCFS1) (Lactobacillus plantarum), this protein is ATP synthase subunit beta.